A 742-amino-acid polypeptide reads, in one-letter code: NAD(P)H-quinone oxidoreductase subunit 5, chloroplastic (742 aa).

A run of 16 helical transmembrane segments spans residues 9 to 29 (WIIP…LLLI), 40 to 60 (WAFP…NLAF), 89 to 109 (IDPL…MVLI), 125 to 145 (FAYM…SNLI), 147 to 167 (IYIF…FWFT), 185 to 205 (GDFG…SFEF), 228 to 248 (AFLL…HVWL), 256 to 276 (TPIS…FLVA), 288 to 308 (IMNI…TLAL), 325 to 345 (LGYI…FHLI), 352 to 372 (ALLF…VGYS), 394 to 414 (TTFL…CFWS), 423 to 443 (WLYS…TAFY), 544 to 564 (YPLL…IPLV), 599 to 619 (FFIN…LAFI), and 720 to 740 (ISFY…FLFL).

The protein belongs to the complex I subunit 5 family. In terms of assembly, NDH is composed of at least 16 different subunits, 5 of which are encoded in the nucleus.

Its subcellular location is the plastid. The protein localises to the chloroplast thylakoid membrane. The catalysed reaction is a plastoquinone + NADH + (n+1) H(+)(in) = a plastoquinol + NAD(+) + n H(+)(out). The enzyme catalyses a plastoquinone + NADPH + (n+1) H(+)(in) = a plastoquinol + NADP(+) + n H(+)(out). Functionally, NDH shuttles electrons from NAD(P)H:plastoquinone, via FMN and iron-sulfur (Fe-S) centers, to quinones in the photosynthetic chain and possibly in a chloroplast respiratory chain. The immediate electron acceptor for the enzyme in this species is believed to be plastoquinone. Couples the redox reaction to proton translocation, and thus conserves the redox energy in a proton gradient. This Lemna minor (Common duckweed) protein is NAD(P)H-quinone oxidoreductase subunit 5, chloroplastic (ndhF).